The following is a 327-amino-acid chain: GTPase Obg (327 aa).

One can recognise an Obg domain in the interval 1–159 (MQFIDQANII…WEVQLELKLL (159 aa)). The 168-residue stretch at 160–327 (AEVGIIGLPN…SLLSEVWKRI (168 aa)) folds into the OBG-type G domain. ATP contacts are provided by residues 166–173 (GLPNAGKS), 191–195 (FTTLI), 213–216 (DIPG), 280–283 (NKIE), and 309–311 (SSS). 2 residues coordinate Mg(2+): Ser173 and Thr193.

Belongs to the TRAFAC class OBG-HflX-like GTPase superfamily. OBG GTPase family. In terms of assembly, monomer. Mg(2+) is required as a cofactor.

The protein resides in the cytoplasm. An essential GTPase which binds GTP, GDP and possibly (p)ppGpp with moderate affinity, with high nucleotide exchange rates and a fairly low GTP hydrolysis rate. Plays a role in control of the cell cycle, stress response, ribosome biogenesis and in those bacteria that undergo differentiation, in morphogenesis control. The protein is GTPase Obg of Prochlorococcus marinus (strain AS9601).